We begin with the raw amino-acid sequence, 337 residues long: tRNA N6-adenosine threonylcarbamoyltransferase (337 aa).

Fe cation-binding residues include H110 and H114. Residues 132–136 (VVSGG), D165, G178, D182, and N268 each bind substrate. D293 provides a ligand contact to Fe cation.

Belongs to the KAE1 / TsaD family. The cofactor is Fe(2+).

It is found in the cytoplasm. The catalysed reaction is L-threonylcarbamoyladenylate + adenosine(37) in tRNA = N(6)-L-threonylcarbamoyladenosine(37) in tRNA + AMP + H(+). In terms of biological role, required for the formation of a threonylcarbamoyl group on adenosine at position 37 (t(6)A37) in tRNAs that read codons beginning with adenine. Is involved in the transfer of the threonylcarbamoyl moiety of threonylcarbamoyl-AMP (TC-AMP) to the N6 group of A37, together with TsaE and TsaB. TsaD likely plays a direct catalytic role in this reaction. The protein is tRNA N6-adenosine threonylcarbamoyltransferase of Sulfurihydrogenibium sp. (strain YO3AOP1).